The sequence spans 251 residues: Small ribosomal subunit protein uS2 (251 aa).

Belongs to the universal ribosomal protein uS2 family.

In Aromatoleum aromaticum (strain DSM 19018 / LMG 30748 / EbN1) (Azoarcus sp. (strain EbN1)), this protein is Small ribosomal subunit protein uS2.